The chain runs to 564 residues: Esterase FE4 (564 aa).

An N-terminal signal peptide occupies residues 1–23 (MKNTCGILLNLFLFIGCFLTCSA). N-linked (GlcNAc...) asparagine glycosylation occurs at Asn81. A disulfide bridge links Cys89 with Cys106. The active-site Acyl-ester intermediate is the Ser214. An intrachain disulfide couples Cys266 to Cys277. Residue Asn269 is glycosylated (N-linked (GlcNAc...) asparagine). The Charge relay system role is filled by Glu339. 3 N-linked (GlcNAc...) asparagine glycosylation sites follow: Asn371, Asn404, and Asn443. His463 acts as the Charge relay system in catalysis.

The protein belongs to the type-B carboxylesterase/lipase family.

It catalyses the reaction a carboxylic ester + H2O = an alcohol + a carboxylate + H(+). Functionally, overproduction of nonspecific esterases is a common mechanism of resistance to organophosphate insecticides. The sequence is that of Esterase FE4 from Myzus persicae (Green peach aphid).